A 149-amino-acid polypeptide reads, in one-letter code: D-aminoacyl-tRNA deacylase (149 aa).

The short motif at 137 to 138 (GP) is the Gly-cisPro motif, important for rejection of L-amino acids element.

It belongs to the DTD family. As to quaternary structure, homodimer.

Its subcellular location is the cytoplasm. It catalyses the reaction glycyl-tRNA(Ala) + H2O = tRNA(Ala) + glycine + H(+). It carries out the reaction a D-aminoacyl-tRNA + H2O = a tRNA + a D-alpha-amino acid + H(+). In terms of biological role, an aminoacyl-tRNA editing enzyme that deacylates mischarged D-aminoacyl-tRNAs. Also deacylates mischarged glycyl-tRNA(Ala), protecting cells against glycine mischarging by AlaRS. Acts via tRNA-based rather than protein-based catalysis; rejects L-amino acids rather than detecting D-amino acids in the active site. By recycling D-aminoacyl-tRNA to D-amino acids and free tRNA molecules, this enzyme counteracts the toxicity associated with the formation of D-aminoacyl-tRNA entities in vivo and helps enforce protein L-homochirality. The polypeptide is D-aminoacyl-tRNA deacylase (Geobacter sp. (strain M21)).